The following is an 86-amino-acid chain: Small ribosomal subunit protein bS16 (86 aa).

Belongs to the bacterial ribosomal protein bS16 family.

The protein is Small ribosomal subunit protein bS16 of Mycoplasmoides gallisepticum (strain R(low / passage 15 / clone 2)) (Mycoplasma gallisepticum).